The following is a 1367-amino-acid chain: DNA polymerase III PolC-type (1367 aa).

In terms of domain architecture, Exonuclease spans 358-513 (FVVLDFETTG…DDARVTAQVF (156 aa)).

The protein belongs to the DNA polymerase type-C family. PolC subfamily.

The protein resides in the cytoplasm. It carries out the reaction DNA(n) + a 2'-deoxyribonucleoside 5'-triphosphate = DNA(n+1) + diphosphate. Functionally, required for replicative DNA synthesis. This DNA polymerase also exhibits 3' to 5' exonuclease activity. In Thermotoga maritima (strain ATCC 43589 / DSM 3109 / JCM 10099 / NBRC 100826 / MSB8), this protein is DNA polymerase III PolC-type.